The sequence spans 133 residues: Small ribosomal subunit protein uS11 (133 aa).

Belongs to the universal ribosomal protein uS11 family. In terms of assembly, part of the 30S ribosomal subunit.

Located on the platform of the 30S subunit. This chain is Small ribosomal subunit protein uS11, found in Aeropyrum pernix (strain ATCC 700893 / DSM 11879 / JCM 9820 / NBRC 100138 / K1).